A 275-amino-acid chain; its full sequence is Expansin-A23 (275 aa).

The first 27 residues, 1–27 (MNLLGKMIYVEGFMMIMATLLVSMSYG), serve as a signal peptide directing secretion. Residues 72-182 (QGACGYGDLF…RRISCARTGG (111 aa)) enclose the Expansin-like EG45 domain. The Expansin-like CBD domain occupies 192–271 (YFLMILPYNV…NWGFGQTFDG (80 aa)).

Belongs to the expansin family. Expansin A subfamily.

It is found in the secreted. It localises to the cell wall. The protein resides in the membrane. In terms of biological role, causes loosening and extension of plant cell walls by disrupting non-covalent bonding between cellulose microfibrils and matrix glucans. No enzymatic activity has been found. The sequence is that of Expansin-A23 (EXPA23) from Arabidopsis thaliana (Mouse-ear cress).